The sequence spans 1337 residues: Phosphoribosylformylglycinamidine synthase (1337 aa).

Residue S215 is modified to Phosphoserine. ATP-binding positions include 322 to 333 (GATTGTGGRIRD) and 402 to 404 (AGF). A phosphothreonine mark is found at T619 and T622. A705 serves as a coordination point for ATP. Residues D706, E745, N749, and D908 each coordinate Mg(2+). S910 contributes to the ATP binding site. The 239-residue stretch at 1063 to 1301 (RVAILREEGS…ALMPHPERAV (239 aa)) folds into the Glutamine amidotransferase type-1 domain. Catalysis depends on C1157, which acts as the Nucleophile. Catalysis depends on residues H1296 and E1298.

This sequence in the N-terminal section; belongs to the FGAMS family.

It is found in the cytoplasm. The catalysed reaction is N(2)-formyl-N(1)-(5-phospho-beta-D-ribosyl)glycinamide + L-glutamine + ATP + H2O = 2-formamido-N(1)-(5-O-phospho-beta-D-ribosyl)acetamidine + L-glutamate + ADP + phosphate + H(+). It participates in purine metabolism; IMP biosynthesis via de novo pathway; 5-amino-1-(5-phospho-D-ribosyl)imidazole from N(2)-formyl-N(1)-(5-phospho-D-ribosyl)glycinamide: step 1/2. Phosphoribosylformylglycinamidine synthase involved in the purines biosynthetic pathway. Catalyzes the ATP-dependent conversion of formylglycinamide ribonucleotide (FGAR) and glutamine to yield formylglycinamidine ribonucleotide (FGAM) and glutamate. The chain is Phosphoribosylformylglycinamidine synthase (Pfas) from Mus musculus (Mouse).